A 376-amino-acid polypeptide reads, in one-letter code: Erythronate-4-phosphate dehydrogenase (376 aa).

S45 and T67 together coordinate substrate. D147 lines the NAD(+) pocket. R209 is a catalytic residue. Residue D233 participates in NAD(+) binding. The active site involves E238. H255 acts as the Proton donor in catalysis. G258 serves as a coordination point for NAD(+). Y259 serves as a coordination point for substrate.

It belongs to the D-isomer specific 2-hydroxyacid dehydrogenase family. PdxB subfamily. As to quaternary structure, homodimer.

The protein resides in the cytoplasm. It catalyses the reaction 4-phospho-D-erythronate + NAD(+) = (R)-3-hydroxy-2-oxo-4-phosphooxybutanoate + NADH + H(+). Its pathway is cofactor biosynthesis; pyridoxine 5'-phosphate biosynthesis; pyridoxine 5'-phosphate from D-erythrose 4-phosphate: step 2/5. Catalyzes the oxidation of erythronate-4-phosphate to 3-hydroxy-2-oxo-4-phosphonooxybutanoate. In Shewanella baltica (strain OS185), this protein is Erythronate-4-phosphate dehydrogenase.